We begin with the raw amino-acid sequence, 498 residues long: ATP synthase subunit beta, chloroplastic (498 aa).

172–179 (GGAGVGKT) lines the ATP pocket.

The protein belongs to the ATPase alpha/beta chains family. F-type ATPases have 2 components, CF(1) - the catalytic core - and CF(0) - the membrane proton channel. CF(1) has five subunits: alpha(3), beta(3), gamma(1), delta(1), epsilon(1). CF(0) has four main subunits: a(1), b(1), b'(1) and c(9-12).

It is found in the plastid. The protein localises to the chloroplast thylakoid membrane. It carries out the reaction ATP + H2O + 4 H(+)(in) = ADP + phosphate + 5 H(+)(out). Produces ATP from ADP in the presence of a proton gradient across the membrane. The catalytic sites are hosted primarily by the beta subunits. The sequence is that of ATP synthase subunit beta, chloroplastic from Oryza nivara (Indian wild rice).